Consider the following 29-residue polypeptide: XKNGYAVDSSGKAPECILSNYCNNECTKV.

Belongs to the long (4 C-C) scorpion toxin superfamily. Sodium channel inhibitor family. Beta subfamily. In terms of tissue distribution, expressed by the venom gland.

It is found in the secreted. In terms of biological role, excitatory insect beta-toxins induce a spastic paralysis. They bind voltage-independently at site-4 of sodium channels (Nav) and shift the voltage of activation toward more negative potentials thereby affecting sodium channel activation and promoting spontaneous and repetitive firing. The fraction to which this protein belongs exhibits low toxicity and induces transient paralysis in all insects tested (the crickets A.domesticus). The polypeptide is Toxin Bl-4 (Buthacus leptochelys (Egyptian fat-tailed scorpion)).